Here is a 216-residue protein sequence, read N- to C-terminus: Somatotropin (216 aa).

A signal peptide spans 1 to 26 (MATGSQTSWLLTFTLLCLPWPQEAGA). Zn(2+) is bound at residue H45. A disulfide bond links C78 and C189. A Phosphoserine modification is found at S131. Zn(2+) is bound at residue E198. Residues C206 and C214 are joined by a disulfide bond.

The protein belongs to the somatotropin/prolactin family.

It localises to the secreted. In terms of biological role, plays an important role in growth control. Its major role in stimulating body growth is to stimulate the liver and other tissues to secrete IGF1. It stimulates both the differentiation and proliferation of myoblasts. It also stimulates amino acid uptake and protein synthesis in muscle and other tissues. The sequence is that of Somatotropin (GH1) from Spalax ehrenbergi (Middle East blind mole rat).